The primary structure comprises 497 residues: MDAMKYNDLRDFLTLLEQQGELKRITLPVDPHLEITEIADRTLRAGGPALLFENPKGYSMPVLCNLFGTPKRVAMGMGQEDVSTLREVGKLLAFLKEPEPPKGFRDLFDKLPQFKQVLNMPTKRLRGAPCQQKIVSGDDVDLNRIPIMTCWPEDAAPLITWGLTVTRGPHKERQNLGIYRQQLIGKNKLIMRWLSHRGGALDYQEWCAAHPGERFPVSVALGADPATILGAVTPVPDTLSEYAFAGLLRGTKTEVVKCISNDLEVPASAEIVLEGYIDPGEMAPEGPYGDHTGYYNEVDNFPVFTVTHITQREDAIYHSTYTGRPPDEPAVLGVALNEVFVPILQKQFPEIVDFYLPPEGCSYRLAVVTIKKQYAGHAKRVMMGVWSFLRQFMYTKFVIVCDDDVNARDWNDVIWAITTRMDPARDTVLVENTPIDYLDFASPVSGLGSKMGLDATNKWPGETQREWGRPIKKDPDVVAHIDAIWDELAIFNNGKSA.

Asparagine 175 contributes to the Mn(2+) binding site. Prenylated FMN contacts are provided by residues 178–180 (IYR), 192–194 (RWL), and 197–198 (RG). Position 241 (glutamate 241) interacts with Mn(2+). Aspartate 290 functions as the Proton donor in the catalytic mechanism.

It belongs to the UbiD family. Homohexamer. Prenylated FMN serves as cofactor. It depends on Mn(2+) as a cofactor.

It localises to the cell membrane. It carries out the reaction a 4-hydroxy-3-(all-trans-polyprenyl)benzoate + H(+) = a 2-(all-trans-polyprenyl)phenol + CO2. It functions in the pathway cofactor biosynthesis; ubiquinone biosynthesis. Its function is as follows. Catalyzes the decarboxylation of 3-octaprenyl-4-hydroxy benzoate to 2-octaprenylphenol, an intermediate step in ubiquinone biosynthesis. This is 3-octaprenyl-4-hydroxybenzoate carboxy-lyase from Shigella flexneri.